The chain runs to 1375 residues: Protein lingerer (1375 aa).

Residues 1-69 (MSTQTRSGGG…KAQPKATTEQ (69 aa)) form a disordered region. A compositionally biased stretch (basic and acidic residues) spans 53–62 (SKTDKPEKAQ). In terms of domain architecture, UBA spans 84–124 (QINEKVLLLLTMTQRSEEEVCCALNECDYDLEAAANFLIEE). 2 stretches are compositionally biased toward low complexity: residues 142–161 (ANNTADGAAGDGDWADGNGN) and 173–184 (SNRGGTRGSSDS). The segment at 142-286 (ANNTADGAAG…GSGRGGNANE (145 aa)) is disordered. Residues 185–204 (RGWRGRETRENERNQRESRE) show a composition bias toward basic and acidic residues. Residues 228-282 (RNGGGRSGPGGGGRGGGFVSRSGRGGGRMGGRTGGPRGDRGSGGPGGAYGSGRGG) are compositionally biased toward gly residues. The residue at position 321 (tyrosine 321) is a Phosphotyrosine. Serine 324 is subject to Phosphoserine. Composition is skewed to polar residues over residues 374–387 (VQQGSHLEESSSSG) and 395–412 (ATLSGSATTPLLQYSAAV). Disordered regions lie at residues 374-453 (VQQG…ASPD) and 613-646 (FEPLPEKVGSGFSIDGQQQQQQPDDYQSKSQQQQ). Gly residues predominate over residues 426 to 441 (SGAGTGASAAAGGGAG). Low complexity-rich tracts occupy residues 442-453 (STPSSFVSASPD) and 629-646 (QQQQQQPDDYQSKSQQQQ). The residue at position 672 (serine 672) is a Phosphoserine. At threonine 673 the chain carries Phosphothreonine. At serine 674 the chain carries Phosphoserine. The segment covering 750–767 (QGYGSYQPSSYQQQAGSG) has biased composition (low complexity). Disordered stretches follow at residues 750-801 (QGYG…SGNA), 869-894 (SVSTSSGVSSNSGSTGNGGVVSGQTG), 987-1036 (KNTS…GGSG), 1203-1234 (SKGGYSSSVNQQSKTQTVSNQSQAGTGSDLTS), and 1251-1277 (EKQSFHSGTPPPFNMPNTQTAGGTSAQ). A compositionally biased stretch (gly residues) spans 768-781 (AQSGTGAVSGGGGT). Composition is skewed to low complexity over residues 789-801 (GGSSSQNSTSGNA), 869-882 (SVSTSSGVSSNSGS), and 987-1008 (KNTSSSNSSGSGGSAATTTGNA). Gly residues predominate over residues 1009–1036 (SGQGAGASTGGVGSSSGAGGAGSGGGSG). Over residues 1265–1277 (MPNTQTAGGTSAQ) the composition is skewed to polar residues.

In terms of tissue distribution, at stage 11, expression is restricted to the neuroblasts, predominant in the central nervous system (CNS), including the brain and ventral nerve cord, and in the PNS. Later embryonic expression is seen in the gonads. Late third instar larvae show expression in the CNS, imaginal disks (including genital, eye-antennal, leg, wing and haltere disks), and gonads. In the larval brain, it is expressed in all of the glial cells and in clusters of neurons that projected contralaterally. In the larval ventral ganglion, it is expressed in subperineurial glia, peripheral exit glia, and a number of interneurons, but not in motor neurons. Isoform B is abundantly expressed in males and females. Isoform D is male specific and expressed at low levels.

Its subcellular location is the cytoplasm. Acts in the nervous system to mediate the control of copulatory organs during courtship. In Drosophila melanogaster (Fruit fly), this protein is Protein lingerer.